The sequence spans 175 residues: Cyclic pyranopterin monophosphate synthase (175 aa).

Residues Leu-78–His-80 and Met-125–Glu-126 each bind substrate. The active site involves Asp-140.

It belongs to the MoaC family. As to quaternary structure, homohexamer; trimer of dimers.

The catalysed reaction is (8S)-3',8-cyclo-7,8-dihydroguanosine 5'-triphosphate = cyclic pyranopterin phosphate + diphosphate. It participates in cofactor biosynthesis; molybdopterin biosynthesis. Functionally, catalyzes the conversion of (8S)-3',8-cyclo-7,8-dihydroguanosine 5'-triphosphate to cyclic pyranopterin monophosphate (cPMP). The protein is Cyclic pyranopterin monophosphate synthase of Rhodopirellula baltica (strain DSM 10527 / NCIMB 13988 / SH1).